The sequence spans 449 residues: Trigger factor (449 aa).

A PPIase FKBP-type domain is found at Gly-173 to Pro-258.

It belongs to the FKBP-type PPIase family. Tig subfamily.

Its subcellular location is the cytoplasm. It catalyses the reaction [protein]-peptidylproline (omega=180) = [protein]-peptidylproline (omega=0). Functionally, involved in protein export. Acts as a chaperone by maintaining the newly synthesized protein in an open conformation. Functions as a peptidyl-prolyl cis-trans isomerase. The chain is Trigger factor from Cupriavidus metallidurans (strain ATCC 43123 / DSM 2839 / NBRC 102507 / CH34) (Ralstonia metallidurans).